The sequence spans 281 residues: DegV domain-containing protein spr0652 (281 aa).

One can recognise a DegV domain in the interval 3–280 (WKIIADSGCD…EGGLLMGYEI (278 aa)). 2 residues coordinate hexadecanoate: Ser-63 and Ser-91.

In terms of biological role, may bind long-chain fatty acids, such as palmitate, and may play a role in lipid transport or fatty acid metabolism. This Streptococcus pneumoniae (strain ATCC BAA-255 / R6) protein is DegV domain-containing protein spr0652.